Consider the following 1221-residue polypeptide: Fibulin-2 (1221 aa).

A signal peptide spans 1 to 26; it reads MLLQESAGVWLALALVTALTPSPSMA. The tract at residues 27–176 is subdomain NA (Cys-rich); that stretch reads VPWQDCTGAE…ELICYQLPGC (150 aa). Positions 27–434 are n; sequence VPWQDCTGAE…DGSTKDLIET (408 aa). Positions 177–434 are subdomain NB (Cys-free); the sequence is HGNFSDAEEG…DGSTKDLIET (258 aa). N-linked (GlcNAc...) asparagine glycosylation is present at N179. Disordered regions lie at residues 248-329 and 341-399; these read PTAA…LIPD and GAAP…PQHP. A compositionally biased stretch (acidic residues) spans 270-283; sequence DTEEDEEEEEEETL. A compositionally biased stretch (basic and acidic residues) spans 312 to 322; sequence QEKEAEAKAGP. The short motif at 421-423 is the Cell attachment site element; it reads RGD. Cystine bridges form between C435-C462, C436-C469, C449-C470, C479-C508, C492-C509, C511-C535, C512-C542, C525-C543, C598-C610, C606-C619, and C621-C634. 3 Anaphylatoxin-like domains span residues 435–477, 478–510, and 511–543; these read CCAA…LKEK, SCVA…QCCD, and CCGL…LSCC. The N-linked (GlcNAc...) asparagine glycan is linked to N497. The region spanning 594-635 is the EGF-like 1; calcium-binding domain; sequence DQDECLMLPGELCQHLCINTVGSYRCACFPGFELQGDGRTCR. Residues 633-661 are disordered; that stretch reads TCRPDRGAPQLDTARESAPRSESAQVSPN. Residues 652–661 are compositionally biased toward polar residues; it reads RSESAQVSPN. Positions 669-708 constitute an EGF-like 2 domain; that stretch reads QPNTCKDNGPCRQVCRVVGDTAMCSCFPGYAIMADGVSCE. 5 cysteine pairs are disulfide-bonded: C673-C683, C679-C692, C694-C707, C713-C726, and C720-C735. Positions 709–755 constitute an EGF-like 3; calcium-binding domain; the sequence is DQDECLMGTHDCSWKQFCVNTLGSFYCVNHTVLCAEGYILNAHRKCV. N737 is a glycosylation site (N-linked (GlcNAc...) asparagine). C742 and C754 are oxidised to a cystine. Residues 756-800 enclose the EGF-like 4; calcium-binding domain; sequence DINECVTDLHTCTRAEHCVNTPGSFQCYKALTCEPGYVLTDGECT. The 46-residue stretch at 801–846 folds into the EGF-like 5; calcium-binding domain; that stretch reads DVDECVTGTHNCQAGFSCQNTKGSFYCQARQRCMDGFLQDPEGNCV. Cystine bridges form between C805-C818, C812-C827, and C833-C845. Positions 847-894 constitute an EGF-like 6; calcium-binding domain; the sequence is DINECTSLLEPCRSGFSCINTVGSYTCQRNPLVCGRGYHANEEGSECV. The 43-residue stretch at 895–937 folds into the EGF-like 7; calcium-binding domain; that stretch reads DVNECETGVHRCGEGQLCYNLPGSYRCDCKPGFQRDAFGRTCI. Cystine bridges form between C899–C912, C906–C921, C923–C936, C942–C954, C950–C963, C965–C978, C984–C993, C989–C1002, C1004–C1017, C1023–C1035, C1031–C1044, C1046–C1060, C1066–C1079, C1073–C1088, and C1093–C1105. One can recognise an EGF-like 8; calcium-binding domain in the interval 938-979; sequence DVNECWVSPGRLCQHTCENTPGSYRCSCAAGFLLAADGKHCE. The region spanning 980–1018 is the EGF-like 9; calcium-binding domain; sequence DVNECETRRCSQECANIYGSYQCYCRQGYQLAEDGHTCT. Residues 1019–1061 form the EGF-like 10; calcium-binding domain; that stretch reads DIDECAQGAGILCTFRCVNVPGSYQCACPEQGYTMMANGRSCK. An EGF-like 11; calcium-binding domain is found at 1062 to 1106; that stretch reads DLDECALGTHNCSEAETCHNIQGSFRCLRFDCPPNYVRVSETKCE. N-linked (GlcNAc...) asparagine glycosylation occurs at N1072. The interval 1111 to 1221 is domain III; the sequence is QDITECQTSP…MYIFFTTFAP (111 aa).

This sequence belongs to the fibulin family. In terms of assembly, homotrimer; disulfide-linked. Interacts with LAMA2. Interacts with FBN1 (via N-terminal domain). Forms a ternary complex with ELN and FBN1. Component of both basement membranes and other connective tissues.

Its subcellular location is the secreted. It is found in the extracellular space. The protein resides in the extracellular matrix. In terms of biological role, its binding to fibronectin and some other ligands is calcium dependent. May act as an adapter that mediates the interaction between FBN1 and ELN. In Mus musculus (Mouse), this protein is Fibulin-2 (Fbln2).